The sequence spans 138 residues: Phosphoribosyl-AMP cyclohydrolase (138 aa).

Asp84 is a binding site for Mg(2+). Cys85 serves as a coordination point for Zn(2+). Positions 86 and 88 each coordinate Mg(2+). Zn(2+) is bound by residues Cys102 and Cys109.

Belongs to the PRA-CH family. In terms of assembly, homodimer. Requires Mg(2+) as cofactor. It depends on Zn(2+) as a cofactor.

The protein localises to the cytoplasm. It catalyses the reaction 1-(5-phospho-beta-D-ribosyl)-5'-AMP + H2O = 1-(5-phospho-beta-D-ribosyl)-5-[(5-phospho-beta-D-ribosylamino)methylideneamino]imidazole-4-carboxamide. It functions in the pathway amino-acid biosynthesis; L-histidine biosynthesis; L-histidine from 5-phospho-alpha-D-ribose 1-diphosphate: step 3/9. Functionally, catalyzes the hydrolysis of the adenine ring of phosphoribosyl-AMP. This Burkholderia vietnamiensis (strain G4 / LMG 22486) (Burkholderia cepacia (strain R1808)) protein is Phosphoribosyl-AMP cyclohydrolase.